A 1527-amino-acid chain; its full sequence is DNA-directed RNA polymerase subunit beta'' (1527 aa).

Residues Cys-220, Cys-296, Cys-303, and Cys-306 each contribute to the Zn(2+) site. 2 stretches are compositionally biased toward basic and acidic residues: residues Arg-644–Glu-661 and Pro-671–Glu-681. Disordered regions lie at residues Arg-644–Glu-681 and Tyr-712–Gly-793. Composition is skewed to acidic residues over residues Gly-737 to Asp-755 and Thr-763 to Asp-786.

It belongs to the RNA polymerase beta' chain family. RpoC2 subfamily. As to quaternary structure, in plastids the minimal PEP RNA polymerase catalytic core is composed of four subunits: alpha, beta, beta', and beta''. When a (nuclear-encoded) sigma factor is associated with the core the holoenzyme is formed, which can initiate transcription. The cofactor is Zn(2+).

The protein resides in the plastid. It is found in the chloroplast. The enzyme catalyses RNA(n) + a ribonucleoside 5'-triphosphate = RNA(n+1) + diphosphate. DNA-dependent RNA polymerase catalyzes the transcription of DNA into RNA using the four ribonucleoside triphosphates as substrates. The sequence is that of DNA-directed RNA polymerase subunit beta'' from Zea mays (Maize).